Here is a 127-residue protein sequence, read N- to C-terminus: Aspartate 1-decarboxylase (127 aa).

The active-site Schiff-base intermediate with substrate; via pyruvic acid is the Ser-25. The residue at position 25 (Ser-25) is a Pyruvic acid (Ser). Thr-57 provides a ligand contact to substrate. The Proton donor role is filled by Tyr-58. 73–75 (GAA) contributes to the substrate binding site.

It belongs to the PanD family. Heterooctamer of four alpha and four beta subunits. Pyruvate is required as a cofactor. Post-translationally, is synthesized initially as an inactive proenzyme, which is activated by self-cleavage at a specific serine bond to produce a beta-subunit with a hydroxyl group at its C-terminus and an alpha-subunit with a pyruvoyl group at its N-terminus.

Its subcellular location is the cytoplasm. It catalyses the reaction L-aspartate + H(+) = beta-alanine + CO2. Its pathway is cofactor biosynthesis; (R)-pantothenate biosynthesis; beta-alanine from L-aspartate: step 1/1. Functionally, catalyzes the pyruvoyl-dependent decarboxylation of aspartate to produce beta-alanine. In Bacillus licheniformis (strain ATCC 14580 / DSM 13 / JCM 2505 / CCUG 7422 / NBRC 12200 / NCIMB 9375 / NCTC 10341 / NRRL NRS-1264 / Gibson 46), this protein is Aspartate 1-decarboxylase.